A 340-amino-acid polypeptide reads, in one-letter code: RNA 3'-terminal phosphate cyclase (340 aa).

ATP contacts are provided by residues Q102 and 284 to 288 (FLGDQ). H308 acts as the Tele-AMP-histidine intermediate in catalysis.

Belongs to the RNA 3'-terminal cyclase family. Type 1 subfamily.

Its subcellular location is the cytoplasm. The catalysed reaction is a 3'-end 3'-phospho-ribonucleotide-RNA + ATP = a 3'-end 2',3'-cyclophospho-ribonucleotide-RNA + AMP + diphosphate. In terms of biological role, catalyzes the conversion of 3'-phosphate to a 2',3'-cyclic phosphodiester at the end of RNA. The mechanism of action of the enzyme occurs in 3 steps: (A) adenylation of the enzyme by ATP; (B) transfer of adenylate to an RNA-N3'P to produce RNA-N3'PP5'A; (C) and attack of the adjacent 2'-hydroxyl on the 3'-phosphorus in the diester linkage to produce the cyclic end product. The biological role of this enzyme is unknown but it is likely to function in some aspects of cellular RNA processing. This Thermococcus onnurineus (strain NA1) protein is RNA 3'-terminal phosphate cyclase.